The following is a 451-amino-acid chain: Cysteine protease ATG4 (451 aa).

The Nucleophile role is filled by cysteine 122. Active-site residues include aspartate 297 and histidine 299.

The protein belongs to the peptidase C54 family. Interacts with ATG8.

It localises to the cytoplasm. The protein resides in the nucleus. Its subcellular location is the preautophagosomal structure. It carries out the reaction [protein]-C-terminal L-amino acid-glycyl-phosphatidylethanolamide + H2O = [protein]-C-terminal L-amino acid-glycine + a 1,2-diacyl-sn-glycero-3-phosphoethanolamine. In terms of biological role, cysteine protease that plays a key role in cytoplasm to vacuole transport (Cvt) and autophagy by mediating both proteolytic activation and delipidation of ATG8. Required for selective autophagic degradation of the nucleus (nucleophagy) as well as for mitophagy which contributes to regulate mitochondrial quantity and quality by eliminating the mitochondria to a basal level to fulfill cellular energy requirements and preventing excess ROS production. The protease activity is required for proteolytic activation of ATG8: cleaves the C-terminal amino acid of ATG8 to reveal a C-terminal glycine. ATG8 ubiquitin-like activity requires the exposure of the glycine at the C-terminus for its conjugation to phosphatidylethanolamine (PE) and its insertion to membranes, which is necessary for autophagy. The ATG8-PE conjugate mediates tethering between adjacent membranes and stimulates membrane hemifusion, leading to expansion of the autophagosomal membrane during autophagy. In addition to the protease activity, also catalyzes deconjugation of PE-conjugated forms of ATG8 during macroautophagy: ATG8 delipidation is required to release the protein from membranes, which facilitates multiple events during macroautophagy, and especially for efficient autophagosome biogenesis, the assembly of ATG9-containing tubulovesicular clusters into phagophores/autophagosomes, and for the disassembly of PAS-associated ATG components. ATG8 delipidation by ATG4 also recycles ATG8-PE generated on inappropriate membranes to maintain a reservoir of unlipidated ATG8 that is required for autophagosome formation at the PAS. The polypeptide is Cysteine protease ATG4 (Kluyveromyces marxianus (strain DMKU3-1042 / BCC 29191 / NBRC 104275) (Yeast)).